Reading from the N-terminus, the 164-residue chain is Crossover junction endodeoxyribonuclease RuvC (164 aa).

Residues aspartate 7, glutamate 67, and aspartate 139 contribute to the active site. Mg(2+) is bound by residues aspartate 7, glutamate 67, and aspartate 139.

Belongs to the RuvC family. In terms of assembly, homodimer which binds Holliday junction (HJ) DNA. The HJ becomes 2-fold symmetrical on binding to RuvC with unstacked arms; it has a different conformation from HJ DNA in complex with RuvA. In the full resolvosome a probable DNA-RuvA(4)-RuvB(12)-RuvC(2) complex forms which resolves the HJ. Mg(2+) is required as a cofactor.

It localises to the cytoplasm. The catalysed reaction is Endonucleolytic cleavage at a junction such as a reciprocal single-stranded crossover between two homologous DNA duplexes (Holliday junction).. Functionally, the RuvA-RuvB-RuvC complex processes Holliday junction (HJ) DNA during genetic recombination and DNA repair. Endonuclease that resolves HJ intermediates. Cleaves cruciform DNA by making single-stranded nicks across the HJ at symmetrical positions within the homologous arms, yielding a 5'-phosphate and a 3'-hydroxyl group; requires a central core of homology in the junction. The consensus cleavage sequence is 5'-(A/T)TT(C/G)-3'. Cleavage occurs on the 3'-side of the TT dinucleotide at the point of strand exchange. HJ branch migration catalyzed by RuvA-RuvB allows RuvC to scan DNA until it finds its consensus sequence, where it cleaves and resolves the cruciform DNA. The protein is Crossover junction endodeoxyribonuclease RuvC of Geobacter sp. (strain M21).